The sequence spans 387 residues: Anhydro-N-acetylmuramic acid kinase (387 aa).

9-16 (GTSADGVD) is an ATP binding site.

It belongs to the anhydro-N-acetylmuramic acid kinase family.

The catalysed reaction is 1,6-anhydro-N-acetyl-beta-muramate + ATP + H2O = N-acetyl-D-muramate 6-phosphate + ADP + H(+). Its pathway is amino-sugar metabolism; 1,6-anhydro-N-acetylmuramate degradation. The protein operates within cell wall biogenesis; peptidoglycan recycling. Its function is as follows. Catalyzes the specific phosphorylation of 1,6-anhydro-N-acetylmuramic acid (anhMurNAc) with the simultaneous cleavage of the 1,6-anhydro ring, generating MurNAc-6-P. Is required for the utilization of anhMurNAc either imported from the medium or derived from its own cell wall murein, and thus plays a role in cell wall recycling. This is Anhydro-N-acetylmuramic acid kinase from Synechococcus sp. (strain WH7803).